A 99-amino-acid polypeptide reads, in one-letter code: Integration host factor subunit alpha (99 aa).

Residues 49 to 71 (FGNFDLRDKNQRPGRNPKTGEDI) form a disordered region.

Belongs to the bacterial histone-like protein family. In terms of assembly, heterodimer of an alpha and a beta chain.

Functionally, this protein is one of the two subunits of integration host factor, a specific DNA-binding protein that functions in genetic recombination as well as in transcriptional and translational control. The polypeptide is Integration host factor subunit alpha (Shewanella denitrificans (strain OS217 / ATCC BAA-1090 / DSM 15013)).